Consider the following 393-residue polypeptide: Sugar efflux transporter A (393 aa).

12 consecutive transmembrane segments (helical) span residues 22-42, 51-71, 82-102, 107-127, 152-172, 174-194, 219-239, 253-273, 287-307, 308-328, 344-364, and 366-386; these read VIAF…SLFL, FMVG…SQIL, KTLI…YAWN, VLLF…PQLF, ISLS…GFGF, AMYL…WLLL, LLLF…LINM, LAGV…LLAG, LAVI…GSWA, LLAL…MGML, LFTN…GIVA, and VWSY…AAVC.

It belongs to the major facilitator superfamily. Set transporter family.

The protein localises to the cell inner membrane. In terms of biological role, involved in the efflux of sugars. The physiological role may be the reduction of the intracellular concentration of toxic sugars or sugar metabolites. Transports IPTG, lactose and arabinose. The chain is Sugar efflux transporter A (sotA) from Dickeya chrysanthemi (Pectobacterium chrysanthemi).